The following is a 248-amino-acid chain: 3,4-dihydroxyphthalate decarboxylase (248 aa).

The active-site Proton donor/acceptor is the Glu-90. Positions 90, 109, 111, and 177 each coordinate a divalent metal cation.

This sequence belongs to the aldolase class II family. A divalent metal cation serves as cofactor.

The enzyme catalyses 3,4-dihydroxyphthalate + H(+) = 3,4-dihydroxybenzoate + CO2. It functions in the pathway xenobiotic degradation; phthalate degradation. In terms of biological role, catalyzes the decarboxylation of 3,4-dihydroxyphthalate to protocatechuate (3,4-dihydroxybenzoate) during phthalate metabolism. This Arthrobacter keyseri protein is 3,4-dihydroxyphthalate decarboxylase.